The following is a 307-amino-acid chain: Adenosylcobinamide-GDP ribazoletransferase (307 aa).

Helical transmembrane passes span 22–42, 58–78, 80–100, 137–157, 161–181, 212–232, 248–268, and 283–303; these read PLFEGIFTALNWMTVLPVPGA, PFVGFVFGMFTAIIMWAIGPI, GVIHVDGLLVAVLIVAFWELL, FGLATAMLSVLLQVAAVASLV, VWWMICFIPVLGRIAGQVTAL, TAALAFWCAELISPLSPLTSV, AWLGGWVAITAVVACVFAALF, and CIGACIHLGASISAVMFAVVA.

This sequence belongs to the CobS family. It depends on Mg(2+) as a cofactor.

The protein localises to the cell membrane. The enzyme catalyses alpha-ribazole + adenosylcob(III)inamide-GDP = adenosylcob(III)alamin + GMP + H(+). It carries out the reaction alpha-ribazole 5'-phosphate + adenosylcob(III)inamide-GDP = adenosylcob(III)alamin 5'-phosphate + GMP + H(+). Its pathway is cofactor biosynthesis; adenosylcobalamin biosynthesis; adenosylcobalamin from cob(II)yrinate a,c-diamide: step 7/7. Its function is as follows. Joins adenosylcobinamide-GDP and alpha-ribazole to generate adenosylcobalamin (Ado-cobalamin). Also synthesizes adenosylcobalamin 5'-phosphate from adenosylcobinamide-GDP and alpha-ribazole 5'-phosphate. This is Adenosylcobinamide-GDP ribazoletransferase from Corynebacterium glutamicum (strain ATCC 13032 / DSM 20300 / JCM 1318 / BCRC 11384 / CCUG 27702 / LMG 3730 / NBRC 12168 / NCIMB 10025 / NRRL B-2784 / 534).